The chain runs to 358 residues: MAIKRSHNSPPATEENLLTPNPTIEETEKAAAEIRPQSLEDYIGQQDLKANLKVTIAAAKARQEAIDHLLFYGPPGLGKTTMALILAAEMGVNCRITAAPALERPRDITGILINLQPRDILFIDEIHRLNRVTEELLYPAMEDYRLDVTIGKGQAAKIRSISLPPFTLIGATTKVGSLTSPLRDRFGLIQRLRFYAVEELTAIILRSATIFNIPITEAGAIEIARRSRGTPRIANRLLKRVRDYVQVKGETIISPQLAAEGLNQLNVDSMGLDWTDRLVLKTMIQQFQGKPVGLEAVAAATGEDAKTIEEVYEPYLLQIGYLNRTPRGRVVTSAAYEHLGLLAKLPKNKDRSLPLFEF.

The disordered stretch occupies residues Met-1–Ile-24. Residues Asn-8–Pro-22 are compositionally biased toward polar residues. Residues Thr-13–Tyr-195 form a large ATPase domain (RuvB-L) region. ATP contacts are provided by residues Ile-34, Arg-35, Gly-76, Lys-79, Thr-80, Thr-81, Glu-142–Tyr-144, Arg-185, Tyr-195, and Arg-232. Thr-80 provides a ligand contact to Mg(2+). Residues Ala-196–Asn-266 form a small ATPAse domain (RuvB-S) region. Positions Ser-269–Phe-358 are head domain (RuvB-H). Positions 324 and 329 each coordinate DNA.

The protein belongs to the RuvB family. As to quaternary structure, homohexamer. Forms an RuvA(8)-RuvB(12)-Holliday junction (HJ) complex. HJ DNA is sandwiched between 2 RuvA tetramers; dsDNA enters through RuvA and exits via RuvB. An RuvB hexamer assembles on each DNA strand where it exits the tetramer. Each RuvB hexamer is contacted by two RuvA subunits (via domain III) on 2 adjacent RuvB subunits; this complex drives branch migration. In the full resolvosome a probable DNA-RuvA(4)-RuvB(12)-RuvC(2) complex forms which resolves the HJ.

The protein resides in the cytoplasm. It catalyses the reaction ATP + H2O = ADP + phosphate + H(+). Its function is as follows. The RuvA-RuvB-RuvC complex processes Holliday junction (HJ) DNA during genetic recombination and DNA repair, while the RuvA-RuvB complex plays an important role in the rescue of blocked DNA replication forks via replication fork reversal (RFR). RuvA specifically binds to HJ cruciform DNA, conferring on it an open structure. The RuvB hexamer acts as an ATP-dependent pump, pulling dsDNA into and through the RuvAB complex. RuvB forms 2 homohexamers on either side of HJ DNA bound by 1 or 2 RuvA tetramers; 4 subunits per hexamer contact DNA at a time. Coordinated motions by a converter formed by DNA-disengaged RuvB subunits stimulates ATP hydrolysis and nucleotide exchange. Immobilization of the converter enables RuvB to convert the ATP-contained energy into a lever motion, pulling 2 nucleotides of DNA out of the RuvA tetramer per ATP hydrolyzed, thus driving DNA branch migration. The RuvB motors rotate together with the DNA substrate, which together with the progressing nucleotide cycle form the mechanistic basis for DNA recombination by continuous HJ branch migration. Branch migration allows RuvC to scan DNA until it finds its consensus sequence, where it cleaves and resolves cruciform DNA. This chain is Holliday junction branch migration complex subunit RuvB, found in Microcystis aeruginosa (strain NIES-843 / IAM M-2473).